A 220-amino-acid polypeptide reads, in one-letter code: Peptide methionine sulfoxide reductase MsrA (220 aa).

Residue cysteine 52 is part of the active site.

The protein belongs to the MsrA Met sulfoxide reductase family.

It carries out the reaction L-methionyl-[protein] + [thioredoxin]-disulfide + H2O = L-methionyl-(S)-S-oxide-[protein] + [thioredoxin]-dithiol. It catalyses the reaction [thioredoxin]-disulfide + L-methionine + H2O = L-methionine (S)-S-oxide + [thioredoxin]-dithiol. Has an important function as a repair enzyme for proteins that have been inactivated by oxidation. Catalyzes the reversible oxidation-reduction of methionine sulfoxide in proteins to methionine. This chain is Peptide methionine sulfoxide reductase MsrA, found in Corynebacterium diphtheriae (strain ATCC 700971 / NCTC 13129 / Biotype gravis).